Reading from the N-terminus, the 613-residue chain is Zinc metalloproteinase-disintegrin-like EoVMP2 (613 aa).

The N-terminal stretch at 1–20 (MMQVLLVTICLAVFPYQGSS) is a signal peptide. The propeptide occupies 21–194 (IILESGNVND…EASQLFATSE (174 aa)). Gln195 bears the Pyrrolidone carboxylic acid mark. Residues 201–397 (RYIEFFIVVD…RNPKCMINKP (197 aa)) form the Peptidase M12B domain. Glu204 contacts Ca(2+). N-linked (GlcNAc...) asparagine glycosylation occurs at Asn219. Asp288 serves as a coordination point for Ca(2+). 3 disulfides stabilise this stretch: Cys312/Cys392, Cys352/Cys376, and Cys354/Cys359. Zn(2+) is bound at residue His337. Glu338 is an active-site residue. Zn(2+) is bound by residues His341 and His347. A glycan (N-linked (GlcNAc...) asparagine) is linked at Asn375. The Ca(2+) site is built by Cys392, Asn395, Val407, Asn410, Leu412, Glu414, Glu417, and Asp420. In terms of domain architecture, Disintegrin spans 405-491 (PPVCGNGLLE…DCPIDGFHAN (87 aa)). Disulfide bonds link Cys408/Cys437, Cys419/Cys432, Cys421/Cys427, Cys431/Cys454, Cys445/Cys451, Cys450/Cys476, Cys463/Cys483, Cys470/Cys502, Cys495/Cys507, Cys514/Cys564, Cys529/Cys575, Cys542/Cys552, Cys559/Cys601, and Cys595/Cys606. The D/ECD-tripeptide signature appears at 469–471 (DCD).

Belongs to the venom metalloproteinase (M12B) family. P-III subfamily. P-IIIa sub-subfamily. As to quaternary structure, monomer. The cofactor is Zn(2+). As to expression, expressed by the venom gland.

The protein resides in the secreted. Snake venom zinc metalloprotease that possesses high hemorrhagic activity. It inhibits collagen-induced platelet aggregation and activates prothrombin (F2). The sequence is that of Zinc metalloproteinase-disintegrin-like EoVMP2 (Svmp3-Eoc22) from Echis ocellatus (Ocellated saw-scaled viper).